A 75-amino-acid chain; its full sequence is UPF0150 protein TM_1313 (75 aa).

It belongs to the UPF0150 family.

The protein is UPF0150 protein TM_1313 of Thermotoga maritima (strain ATCC 43589 / DSM 3109 / JCM 10099 / NBRC 100826 / MSB8).